Reading from the N-terminus, the 866-residue chain is Leucine--tRNA ligase (866 aa).

A 'HIGH' region motif is present at residues 59 to 69 (PYPSGDLHMGH). Residues 393 to 421 (VPVIKTDPQTGEPLLPESAPLESPAETGQ) are disordered. Positions 404–418 (EPLLPESAPLESPAE) are enriched in low complexity. The 'KMSKS' region signature appears at 628–632 (AMSKS). Lysine 631 serves as a coordination point for ATP.

It belongs to the class-I aminoacyl-tRNA synthetase family.

Its subcellular location is the cytoplasm. It carries out the reaction tRNA(Leu) + L-leucine + ATP = L-leucyl-tRNA(Leu) + AMP + diphosphate. This is Leucine--tRNA ligase from Leifsonia xyli subsp. xyli (strain CTCB07).